Consider the following 430-residue polypeptide: Adenylosuccinate synthetase (430 aa).

GTP is bound by residues glycine 12 to lysine 18 and glycine 40 to threonine 42. Residue aspartate 13 is the Proton acceptor of the active site. Residues aspartate 13 and glycine 40 each coordinate Mg(2+). IMP contacts are provided by residues aspartate 13–lysine 16, asparagine 38–histidine 41, threonine 128, arginine 142, glutamine 223, threonine 238, and arginine 302. Histidine 41 serves as the catalytic Proton donor. Residue threonine 298–arginine 304 participates in substrate binding. Residues arginine 304, serine 330–aspartate 332, and serine 413–glycine 415 contribute to the GTP site.

Belongs to the adenylosuccinate synthetase family. As to quaternary structure, homodimer. Mg(2+) serves as cofactor.

It is found in the cytoplasm. It carries out the reaction IMP + L-aspartate + GTP = N(6)-(1,2-dicarboxyethyl)-AMP + GDP + phosphate + 2 H(+). It participates in purine metabolism; AMP biosynthesis via de novo pathway; AMP from IMP: step 1/2. Functionally, plays an important role in the de novo pathway of purine nucleotide biosynthesis. Catalyzes the first committed step in the biosynthesis of AMP from IMP. The protein is Adenylosuccinate synthetase of Lactococcus lactis subsp. cremoris (strain MG1363).